The primary structure comprises 396 residues: S-adenosylmethionine synthase (396 aa).

Residue His-16 participates in ATP binding. Residue Asp-18 coordinates Mg(2+). Residue Glu-44 coordinates K(+). 2 residues coordinate L-methionine: Glu-57 and Gln-100. The flexible loop stretch occupies residues 100–110 (QSQDIARGVDN). ATP is bound by residues 162–164 (DGK), Asp-237, 243–244 (RK), Ala-260, and Lys-264. Asp-237 provides a ligand contact to L-methionine. Lys-268 contacts L-methionine.

The protein belongs to the AdoMet synthase family. In terms of assembly, homotetramer; dimer of dimers. The cofactor is Mg(2+). Requires K(+) as cofactor.

Its subcellular location is the cytoplasm. The catalysed reaction is L-methionine + ATP + H2O = S-adenosyl-L-methionine + phosphate + diphosphate. It participates in amino-acid biosynthesis; S-adenosyl-L-methionine biosynthesis; S-adenosyl-L-methionine from L-methionine: step 1/1. Catalyzes the formation of S-adenosylmethionine (AdoMet) from methionine and ATP. The overall synthetic reaction is composed of two sequential steps, AdoMet formation and the subsequent tripolyphosphate hydrolysis which occurs prior to release of AdoMet from the enzyme. The sequence is that of S-adenosylmethionine synthase from Myxococcus xanthus.